Reading from the N-terminus, the 314-residue chain is Olfactory receptor 5D14 (314 aa).

At 1-27 the chain is on the extracellular side; it reads MMMVLRNLSMEPTFALLGFTDYPKLQI. N-linked (GlcNAc...) asparagine glycosylation is present at asparagine 7. Residues 28-48 form a helical membrane-spanning segment; that stretch reads PLFLVFLLMYVITVVGNLGMI. At 49 to 56 the chain is on the cytoplasmic side; the sequence is IIIKINPK. The chain crosses the membrane as a helical span at residues 57-77; sequence FHTPMYFFLSHLSFVDFCYSS. Residues 78 to 101 are Extracellular-facing; that stretch reads IVTPKLLENLVMADKSIFYFSCMM. The chain crosses the membrane as a helical span at residues 102–122; the sequence is QYFLSCTAVVTESFLLAVMAY. Topologically, residues 123–141 are cytoplasmic; the sequence is DRFVAICNPLLYTVAMSQR. The chain crosses the membrane as a helical span at residues 142–162; sequence LCALLVAGSYLWGMFGPLVLL. The Extracellular portion of the chain corresponds to 163 to 198; sequence CYALRLNFSGPNVINHFFCEYTALISVSGSDILIPH. Asparagine 169 carries N-linked (GlcNAc...) asparagine glycosylation. A helical transmembrane segment spans residues 199–219; it reads LLLFSFATFNEMCTLLIILTS. Residues 220-239 lie on the Cytoplasmic side of the membrane; it reads YVFIFVTVLKIRSVSGRHKA. A helical transmembrane segment spans residues 240 to 260; sequence FSTWASHLTSITIFHGTILFL. At 261–273 the chain is on the extracellular side; the sequence is YCVPNSKNSRQTV. A helical transmembrane segment spans residues 274 to 294; that stretch reads KVASVFYTVVNPMLNPLIYSL. At 295-314 the chain is on the cytoplasmic side; it reads RNKDVKDAFWKLIHTQVPFH.

Belongs to the G-protein coupled receptor 1 family.

The protein localises to the cell membrane. Odorant receptor. This is Olfactory receptor 5D14 (OR5D14) from Homo sapiens (Human).